Reading from the N-terminus, the 588-residue chain is Disabled homolog 1 (588 aa).

The interval 1-26 (MSTETELQVAVKTSAKKDSRKKGQDR) is disordered. The span at 15–26 (AKKDSRKKGQDR) shows a compositional bias: basic and acidic residues. In terms of domain architecture, PID spans 36–189 (KGEGVRYKAK…CEQAVYQTIL (154 aa)). Residues tyrosine 198, tyrosine 220, and tyrosine 232 each carry the phosphotyrosine modification. Disordered stretches follow at residues 224–243 (TSQK…NSQP), 420–444 (LATV…QKMG), 451–470 (FQMV…PSLT), and 502–588 (LTPV…QDGS). Positions 424–436 (PGTNDSARSSPQS) are enriched in polar residues. 2 stretches are compositionally biased toward low complexity: residues 503 to 512 (TPVTSTTPST) and 523 to 534 (SSPSKSSASHVS). Serine 524 carries the post-translational modification Phosphoserine; by CDK5. Acidic residues predominate over residues 537–546 (TADDIFEEGF).

Associates with the SH2 domains of SRC, FYN and ABL. Interacts (phosphorylated on tyrosine residues) with CRK and CRKL (via respective SH2 domain). Interacts with SIAH1, LRP8 and VLDLR. Interacts with LRP1. Interacts with APLP1 (via NPXY motif). Interacts with DAB2IP. Interacts with ZSWIM8. Phosphorylated by FYN on Tyr-198 and Tyr-220 upon reelin induction in embryonic neurons. Also found phosphorylated on Tyr-232 upon reelin induction. Also phosphorylated on Ser-524 independently of reelin signaling. Post-translationally, ubiquitinated by various cullin-5-RING E3 ubiquitin-protein ligase complexes (ECS complexes) following ligand-binding and phosphorylation, leading to its degradation. Ubiquitinated by the ECS(SOCS7) complex in the cortical plate of the developing cerebral cortex following ligand-binding and phosphorylation by FYN, leading to its degradation by the proteasome. Recognized by ZSWIM8 through a disorder targets misorder mechanism that eliminates misfolded DAB1 via ubiquitination and proteasomal degradation. In terms of tissue distribution, expressed mainly in brain. Specifically expressin in cortical neurons.

The protein localises to the cytoplasm. Its function is as follows. Signaling adapter of the reelin-mediated signaling pathway, which regulates the migration and differentiation of postmitotic neurons during brain development. Mediates intracellular transduction of Reelin signaling following reelin (RELN)-binding to its receptor: acts by docking proteins through its phosphotyrosine residues and PID domain. This chain is Disabled homolog 1, found in Mus musculus (Mouse).